The primary structure comprises 162 residues: Cytochrome c-type biogenesis protein CcmE (162 aa).

The Cytoplasmic portion of the chain corresponds to 1–8; that stretch reads MNPVRKKR. Residues 9-29 traverse the membrane as a helical; Signal-anchor for type II membrane protein segment; that stretch reads LIIVLAIVAGVGAAVGLALSA. The Periplasmic portion of the chain corresponds to 30-162; the sequence is LQQNINLFYT…GETSYNQEGK (133 aa). Heme is bound by residues H124 and Y128. Residues 139–148 are compositionally biased toward basic and acidic residues; the sequence is DSGQLKHYEN. The segment at 139-162 is disordered; the sequence is DSGQLKHYENGKAAGETSYNQEGK.

This sequence belongs to the CcmE/CycJ family.

The protein resides in the cell inner membrane. In terms of biological role, heme chaperone required for the biogenesis of c-type cytochromes. Transiently binds heme delivered by CcmC and transfers the heme to apo-cytochromes in a process facilitated by CcmF and CcmH. The chain is Cytochrome c-type biogenesis protein CcmE from Pseudomonas aeruginosa (strain ATCC 15692 / DSM 22644 / CIP 104116 / JCM 14847 / LMG 12228 / 1C / PRS 101 / PAO1).